Reading from the N-terminus, the 560-residue chain is Protein GAT2 (560 aa).

Disordered stretches follow at residues 274 to 297 (RQQE…FSNK), 345 to 383 (FLST…ISSS), and 412 to 461 (LNTK…SDEK). Low complexity predominate over residues 347–361 (STSSSSPSPTAGSAP). Residues 369-378 (RQDDPNDKKM) show a composition bias toward basic and acidic residues. Residues 414 to 425 (TKKKNNRGRPRA) show a composition bias toward basic residues. A compositionally biased stretch (polar residues) spans 428–456 (RQPTLTTSSHFINNSNPGAAAVSTTTPAA). A GATA-type zinc finger spans residues 472-497 (CFHCGETETPEWRKGPYGTRTLCNAC).

In Saccharomyces cerevisiae (strain ATCC 204508 / S288c) (Baker's yeast), this protein is Protein GAT2 (GAT2).